The chain runs to 346 residues: Anthranilate phosphoribosyltransferase (346 aa).

5-phospho-alpha-D-ribose 1-diphosphate contacts are provided by residues Gly-80, 83-84 (GD), Thr-88, 90-93 (NIST), 108-116 (KHGNTAVSS), and Ser-120. Anthranilate is bound at residue Gly-80. Residue Ser-92 participates in Mg(2+) binding. Residue Asn-111 participates in anthranilate binding. Anthranilate is bound at residue Arg-166. Residues Asp-225 and Glu-226 each contribute to the Mg(2+) site.

This sequence belongs to the anthranilate phosphoribosyltransferase family. As to quaternary structure, homodimer. The cofactor is Mg(2+).

It carries out the reaction N-(5-phospho-beta-D-ribosyl)anthranilate + diphosphate = 5-phospho-alpha-D-ribose 1-diphosphate + anthranilate. It functions in the pathway amino-acid biosynthesis; L-tryptophan biosynthesis; L-tryptophan from chorismate: step 2/5. In terms of biological role, catalyzes the transfer of the phosphoribosyl group of 5-phosphorylribose-1-pyrophosphate (PRPP) to anthranilate to yield N-(5'-phosphoribosyl)-anthranilate (PRA). This Desulforudis audaxviator (strain MP104C) protein is Anthranilate phosphoribosyltransferase.